The chain runs to 490 residues: tRNA-guanine(15) transglycosylase (490 aa).

D92 serves as the catalytic Nucleophile. Residues D127 and A195 each contribute to the substrate site. Zn(2+)-binding residues include C278, C280, and C283.

This sequence belongs to the archaeosine tRNA-ribosyltransferase family. The cofactor is Zn(2+).

The catalysed reaction is guanosine(15) in tRNA + 7-cyano-7-deazaguanine = 7-cyano-7-carbaguanosine(15) in tRNA + guanine. It participates in tRNA modification; archaeosine-tRNA biosynthesis. Functionally, exchanges the guanine residue with 7-cyano-7-deazaguanine (preQ0) at position 15 in the dihydrouridine loop (D-loop) of archaeal tRNAs. This Haloarcula marismortui (strain ATCC 43049 / DSM 3752 / JCM 8966 / VKM B-1809) (Halobacterium marismortui) protein is tRNA-guanine(15) transglycosylase.